Here is a 197-residue protein sequence, read N- to C-terminus: MSSVTLVAKSKLPTPWGTFTLVGFQETGTGKDHAALVMGDITGDEPVLGRIHSECLTGDALFSLRCDCGFQLQAALENIAKAGRGVLLYVRQEGRGIGLLNKIRAYHLQDQGADTVEANVALGFAADMRDYTICADMLKQLEVKSLKLMTNNPRKMKAMESFGIPVAERVPLQEGRNPHNEFYLSTKANKLDHMFKK.

Residue 50-54 (RIHSE) participates in GTP binding. Residues Cys55, Cys66, and Cys68 each coordinate Zn(2+). Residues Gln71, 93 to 95 (EGR), and Thr115 contribute to the GTP site. The active-site Proton acceptor is the Asp127. Residue Arg129 is the Nucleophile of the active site. Positions 150 and 155 each coordinate GTP.

It belongs to the GTP cyclohydrolase II family. Requires Zn(2+) as cofactor.

It catalyses the reaction GTP + 4 H2O = 2,5-diamino-6-hydroxy-4-(5-phosphoribosylamino)-pyrimidine + formate + 2 phosphate + 3 H(+). The protein operates within cofactor biosynthesis; riboflavin biosynthesis; 5-amino-6-(D-ribitylamino)uracil from GTP: step 1/4. Catalyzes the conversion of GTP to 2,5-diamino-6-ribosylamino-4(3H)-pyrimidinone 5'-phosphate (DARP), formate and pyrophosphate. This Aeromonas hydrophila subsp. hydrophila (strain ATCC 7966 / DSM 30187 / BCRC 13018 / CCUG 14551 / JCM 1027 / KCTC 2358 / NCIMB 9240 / NCTC 8049) protein is GTP cyclohydrolase-2.